Consider the following 152-residue polypeptide: Protein SprT-like (152 aa).

The region spanning 7–147 (QRLVEEVSLQ…CGKCKGKLKP (141 aa)) is the SprT-like domain. H67 contacts Zn(2+). Residue E68 is part of the active site. H71 is a Zn(2+) binding site.

It belongs to the SprT family. The cofactor is Zn(2+).

Its subcellular location is the cytoplasm. The protein is Protein SprT-like of Bacillus cereus (strain B4264).